Consider the following 346-residue polypeptide: Probable electron transfer flavoprotein subunit alpha, mitochondrial (346 aa).

285–313 (LYVAIGISGAIQHLAGMKESKMIIAINKD) is an FAD binding site.

This sequence belongs to the ETF alpha-subunit/FixB family. As to quaternary structure, heterodimer of an alpha and a beta subunit. FAD serves as cofactor.

It is found in the mitochondrion matrix. The electron transfer flavoprotein serves as a specific electron acceptor for several dehydrogenases, including five acyl-CoA dehydrogenases, glutaryl-CoA and sarcosine dehydrogenase. It transfers the electrons to the main mitochondrial respiratory chain via ETF-ubiquinone oxidoreductase (ETF dehydrogenase). The chain is Probable electron transfer flavoprotein subunit alpha, mitochondrial (ETF1) from Cryptococcus gattii serotype B (strain WM276 / ATCC MYA-4071) (Filobasidiella gattii).